A 139-amino-acid chain; its full sequence is Putative pre-16S rRNA nuclease (139 aa).

The protein belongs to the YqgF nuclease family.

Its subcellular location is the cytoplasm. In terms of biological role, could be a nuclease involved in processing of the 5'-end of pre-16S rRNA. The chain is Putative pre-16S rRNA nuclease from Pectobacterium carotovorum subsp. carotovorum (strain PC1).